A 113-amino-acid chain; its full sequence is UPF0342 protein SZO_10960 (113 aa).

It belongs to the UPF0342 family.

In Streptococcus equi subsp. zooepidemicus (strain H70), this protein is UPF0342 protein SZO_10960.